The following is a 281-amino-acid chain: Bis(5'-nucleosyl)-tetraphosphatase, symmetrical (281 aa).

It belongs to the Ap4A hydrolase family.

It carries out the reaction P(1),P(4)-bis(5'-adenosyl) tetraphosphate + H2O = 2 ADP + 2 H(+). Its function is as follows. Hydrolyzes diadenosine 5',5'''-P1,P4-tetraphosphate to yield ADP. This chain is Bis(5'-nucleosyl)-tetraphosphatase, symmetrical, found in Pectobacterium atrosepticum (strain SCRI 1043 / ATCC BAA-672) (Erwinia carotovora subsp. atroseptica).